A 416-amino-acid polypeptide reads, in one-letter code: Signal recognition particle receptor FtsY (416 aa).

Basic residues predominate over residues 1-10 (MFSFFRRKKK). The tract at residues 1-24 (MFSFFRRKKKQETPALEEAQVQET) is disordered. GTP is bound by residues 224–231 (GINGAGKT), 304–308 (DTAGR), and 368–371 (TKLD).

This sequence belongs to the GTP-binding SRP family. FtsY subfamily. Part of the signal recognition particle protein translocation system, which is composed of SRP and FtsY. SRP is a ribonucleoprotein composed of Ffh and a 4.5S RNA molecule. Mg(2+) serves as cofactor.

It is found in the cell membrane. The protein localises to the cytoplasm. The catalysed reaction is GTP + H2O = GDP + phosphate + H(+). Functionally, involved in targeting and insertion of nascent membrane proteins into the cytoplasmic membrane. Acts as a receptor for the complex formed by the signal recognition particle (SRP) and the ribosome-nascent chain (RNC). Interaction with SRP-RNC leads to the transfer of the RNC complex to the Sec translocase for insertion into the membrane, the hydrolysis of GTP by both Ffh and FtsY, and the dissociation of the SRP-FtsY complex into the individual components. The polypeptide is Signal recognition particle receptor FtsY (Neisseria gonorrhoeae).